A 758-amino-acid chain; its full sequence is MPNFCAAPNCTRKSTQSDLAFFRFPRDPARCQKWVENCRRADLEDKTPDQLNKHYRLCAKHFETSMICRTSPYRTVLRDNAIPTIFDLTSHLNNPHSRHRKRIKELSEDEIRTLKQKKIEETSEQEQETNTNAQNPSAEAVNQQDANVLPLTLEEKENKEYLKSLFEILVLMGKQNIPLDGHEADEVPEGLFAPDNFQALLECRINSGEEVLRKRFEATAVNTLFCSKTQQRHMLEICESCIREETLREVRDSHFFSIITDDVVDIAGEEHLPVLVRFVDDAHNLREEFVGFLPYEADAEILAVKFHTTITEKWGLNMEYCRGQAYIVSSGFSSKMKVVASRLLEKYPQAVYTLCSSCALNAWLAKSVPVIGVSVALGTIEEVCSFFHRSPQLLLELDSVISVLFQNSEERAKELKEICHSQWTGRHDAFEILVDLLQALVLCLDGIINSDTNVRWNNYIAGRAFVLCSAVTDFDFIVTIVVLKNVLSFTRAFGKNLQGQTSDVFFAASSLTAVLHSLNEVMENIEVYHEFWFEEATNLATKLDIQMKLPGKFRRAQQGNLESQLTSESYYKDTLSVPTVEHIIQELKDIFSEQHLKALKCLSLVPSVMGQLKFNTSEEHHADMYRSDLPNPDTLSAELHCWRIKWKHRGKDIELPSTIYEALHLPDIKFFPNVYALLKVLCILPVMKVENERYENGRKRLKAYLRNTLTDQRSSNLALLNINFDIKHDLDLMVDTYIKLYTNKSELPTINSETIENT.

A THAP-type zinc finger spans residues 1-86; that stretch reads MPNFCAAPNC…LRDNAIPTIF (86 aa). The interval 116-141 is disordered; sequence QKKIEETSEQEQETNTNAQNPSAEAV. Phosphoserine is present on S563.

As to quaternary structure, interacts with DNAJC3, probably sequestring it.

Upstream regulator of interferon-induced serine/threonine protein kinase R (PKR). May block the PKR-inhibitory function of DNAJC3, resulting in restoration of kinase activity and suppression of cell growth. This Mus musculus (Mouse) protein is 52 kDa repressor of the inhibitor of the protein kinase.